The chain runs to 701 residues: Elongation factor G 2 (701 aa).

One can recognise a tr-type G domain in the interval 8-290 (NRYRNIGIVA…AVIEFLPAPA (283 aa)). Residues 17–24 (AHVDAGKT), 88–92 (DTPGH), and 142–145 (NKMD) each bind GTP.

Belongs to the TRAFAC class translation factor GTPase superfamily. Classic translation factor GTPase family. EF-G/EF-2 subfamily.

Its subcellular location is the cytoplasm. Catalyzes the GTP-dependent ribosomal translocation step during translation elongation. During this step, the ribosome changes from the pre-translocational (PRE) to the post-translocational (POST) state as the newly formed A-site-bound peptidyl-tRNA and P-site-bound deacylated tRNA move to the P and E sites, respectively. Catalyzes the coordinated movement of the two tRNA molecules, the mRNA and conformational changes in the ribosome. This chain is Elongation factor G 2, found in Pseudoalteromonas atlantica (strain T6c / ATCC BAA-1087).